Reading from the N-terminus, the 209-residue chain is Large ribosomal subunit protein uL3 (209 aa).

Residues G112 to N122 show a composition bias toward polar residues. Positions G112–M146 are disordered.

Belongs to the universal ribosomal protein uL3 family. In terms of assembly, part of the 50S ribosomal subunit. Forms a cluster with proteins L14 and L19.

One of the primary rRNA binding proteins, it binds directly near the 3'-end of the 23S rRNA, where it nucleates assembly of the 50S subunit. The polypeptide is Large ribosomal subunit protein uL3 (Lactobacillus gasseri (strain ATCC 33323 / DSM 20243 / BCRC 14619 / CIP 102991 / JCM 1131 / KCTC 3163 / NCIMB 11718 / NCTC 13722 / AM63)).